The chain runs to 102 residues: DSSESNEIEDVLFLGRQDANSFMRQPRPPNHWDSRDRFKSPRERTREKCEEYRPCERLARQVGLKRAYGKYFGNRRQRPSTSGRLRPRKYRASRYRNHHYRY.

Phosphoserine is present on residues Ser-2, Ser-3, and Ser-5. The disordered stretch occupies residues 18-45 (DANSFMRQPRPPNHWDSRDRFKSPRERT). The 47-residue stretch at 27–73 (RPPNHWDSRDRFKSPRERTREKCEEYRPCERLARQVGLKRAYGKYFG) folds into the Gla domain. A compositionally biased stretch (basic and acidic residues) spans 30-45 (NHWDSRDRFKSPRERT). 4-carboxyglutamate occurs at positions 43, 47, 50, and 51. Cys-49 and Cys-55 form a disulfide bridge. The segment at 72–102 (FGNRRQRPSTSGRLRPRKYRASRYRNHHYRY) is disordered. Over residues 85–102 (LRPRKYRASRYRNHHYRY) the composition is skewed to basic residues.

The protein belongs to the osteocalcin/matrix Gla protein family. In terms of processing, requires vitamin K-dependent gamma-carboxylation for its function. Accounts for 35-40% of the total protein in the acid demineralization extract of calcified cartilage.

Its subcellular location is the secreted. In terms of biological role, associates with the organic matrix of calcified cartilage. The chain is Matrix Gla protein (mgp) from Galeorhinus galeus (Tope shark).